The primary structure comprises 472 residues: NALCN channel auxiliary factor 2 (472 aa).

The chain crosses the membrane as a helical span at residues 47 to 67 (LASLLFFTVLLADHLWLCAGA). Residues 77–114 (AMRPPWGAGRERQPVPPRAVLPLPPPPPGEPSAPPGTC) are disordered. The segment covering 90–110 (PVPPRAVLPLPPPPPGEPSAP) has biased composition (pro residues). N-linked (GlcNAc...) asparagine glycans are attached at residues N120 and N193. Residues 433–453 (LCVLVLMLLHTVVSFSSNQGG) form a helical membrane-spanning segment.

The protein belongs to the NALF family.

The protein resides in the membrane. Probable component of the NALCN channel complex, a channel that regulates the resting membrane potential and controls neuronal excitability. In Homo sapiens (Human), this protein is NALCN channel auxiliary factor 2.